The sequence spans 290 residues: uncharacterized protein (290 aa).

It belongs to the UreD family.

It is found in the cytoplasm. Its subcellular location is the nucleus. Probably facilitates nickel incorporation. This is an uncharacterized protein from Schizosaccharomyces pombe (strain 972 / ATCC 24843) (Fission yeast).